Reading from the N-terminus, the 167-residue chain is Leptin (167 aa).

The signal sequence occupies residues 1 to 21; it reads MCWRPLCRFLWLWSYLSYVQA. Cys117 and Cys167 are oxidised to a cystine.

The protein belongs to the leptin family.

It is found in the secreted. In terms of biological role, key player in the regulation of energy balance and body weight control. Once released into the circulation, has central and peripheral effects by binding LEPR, found in many tissues, which results in the activation of several major signaling pathways. In the hypothalamus, acts as an appetite-regulating factor that induces a decrease in food intake and an increase in energy consumption by inducing anorexinogenic factors and suppressing orexigenic neuropeptides, also regulates bone mass and secretion of hypothalamo-pituitary-adrenal hormones. In the periphery, increases basal metabolism, influences reproductive function, regulates pancreatic beta-cell function and insulin secretion, is pro-angiogenic for endothelial cell and affects innate and adaptive immunity. In the arcuate nucleus of the hypothalamus, activates by depolarization POMC neurons inducing FOS and SOCS3 expression to release anorexigenic peptides and inhibits by hyperpolarization NPY neurons inducing SOCS3 with a consequent reduction on release of orexigenic peptides. In addition to its known satiety inducing effect, has a modulatory role in nutrient absorption. In the intestine, reduces glucose absorption by enterocytes by activating PKC and leading to a sequential activation of p38, PI3K and ERK signaling pathways which exerts an inhibitory effect on glucose absorption. Acts as a growth factor on certain tissues, through the activation of different signaling pathways increases expression of genes involved in cell cycle regulation such as CCND1, via JAK2-STAT3 pathway, or VEGFA, via MAPK1/3 and PI3K-AKT1 pathways. May also play an apoptotic role via JAK2-STAT3 pathway and up-regulation of BIRC5 expression. Pro-angiogenic, has mitogenic activity on vascular endothelial cells and plays a role in matrix remodeling by regulating the expression of matrix metalloproteinases (MMPs) and tissue inhibitors of metalloproteinases (TIMPs). In innate immunity, modulates the activity and function of neutrophils by increasing chemotaxis and the secretion of oxygen radicals. Increases phagocytosis by macrophages and enhances secretion of pro-inflammatory mediators. Increases cytotoxic ability of NK cells. Plays a pro-inflammatory role, in synergy with IL1B, by inducing NOS2 which promotes the production of IL6, IL8 and Prostaglandin E2, through a signaling pathway that involves JAK2, PI3K, MAP2K1/MEK1 and MAPK14/p38. In adaptive immunity, promotes the switch of memory T-cells towards T helper-1 cell immune responses. Increases CD4(+)CD25(-) T-cell proliferation and reduces autophagy during TCR (T-cell receptor) stimulation, through MTOR signaling pathway activation and BCL2 up-regulation. The chain is Leptin (Lep) from Rattus norvegicus (Rat).